The sequence spans 364 residues: Carbamoyl phosphate synthase pyrimidine-specific small chain (364 aa).

The segment at 1–169 (MKRYLVLEDG…AYPNPATGPN (169 aa)) is CPSase. L-glutamine is bound by residues serine 45, glycine 217, and glycine 219. The Glutamine amidotransferase type-1 domain maps to 169–356 (NVVVVDFGLK…IDLMAANQAT (188 aa)). The Nucleophile role is filled by cysteine 244. L-glutamine is bound by residues leucine 245, glutamine 248, asparagine 286, glycine 288, and tyrosine 289. Active-site residues include histidine 329 and aspartate 331.

The protein belongs to the CarA family. As to quaternary structure, composed of two chains; the small (or glutamine) chain promotes the hydrolysis of glutamine to ammonia, which is used by the large (or ammonia) chain to synthesize carbamoyl phosphate. Tetramer of heterodimers (alpha,beta)4.

The catalysed reaction is hydrogencarbonate + L-glutamine + 2 ATP + H2O = carbamoyl phosphate + L-glutamate + 2 ADP + phosphate + 2 H(+). It carries out the reaction L-glutamine + H2O = L-glutamate + NH4(+). It participates in pyrimidine metabolism; UMP biosynthesis via de novo pathway; (S)-dihydroorotate from bicarbonate: step 1/3. With respect to regulation, inhibited by pyrimidine. Functionally, small subunit of the glutamine-dependent carbamoyl phosphate synthetase (CPSase). CPSase catalyzes the formation of carbamoyl phosphate from the ammonia moiety of glutamine, carbonate, and phosphate donated by ATP, constituting the first step of the biosynthetic pathway leading to pyrimidine nucleotides. The small subunit (glutamine amidotransferase) binds and cleaves glutamine to supply the large subunit with the substrate ammonia. This chain is Carbamoyl phosphate synthase pyrimidine-specific small chain, found in Lactiplantibacillus plantarum (strain ATCC BAA-793 / NCIMB 8826 / WCFS1) (Lactobacillus plantarum).